Reading from the N-terminus, the 327-residue chain is Deoxyribonuclease (327 aa).

Residues 1 to 24 (MSKKLRNFLVRIIVAAFASFAVMA) constitute a signal peptide (or 35). Residues 299 to 327 (DSTTDEIENSVDDSEEIVYNDTTTEEEEN) are disordered.

The catalysed reaction is Endonucleolytic cleavage to 5'-phosphodinucleotide and 5'-phosphooligonucleotide end-products.. Its function is as follows. May have a role in S.equisimilis virulence. This Streptococcus dysgalactiae subsp. equisimilis (Streptococcus equisimilis) protein is Deoxyribonuclease (sdc).